The chain runs to 50 residues: Protein PsbN (50 aa).

The chain crosses the membrane as a helical span at residues 14 to 34 (VAVTILAILLALTGFGLWTAF).

This sequence belongs to the PsbN family.

It localises to the cellular thylakoid membrane. Functionally, may play a role in photosystem I and II biogenesis. The protein is Protein PsbN of Prochlorococcus marinus (strain MIT 9312).